The chain runs to 118 residues: Peptidyl-prolyl cis-trans isomerase Pin1 (118 aa).

Disordered stretches follow at residues M1–R37 and L61–Q84. The region spanning S3 to G118 is the PpiC domain. Positions L12–S22 are enriched in basic residues.

Belongs to the PpiC/parvulin rotamase family. The N-terminus is blocked. Expressed in roots, stems, leaves, flowers and seedlings.

Its subcellular location is the cytoplasm. It localises to the nucleus. It carries out the reaction [protein]-peptidylproline (omega=180) = [protein]-peptidylproline (omega=0). With respect to regulation, inhibited in vitro by juglone. Functionally, prolyl cis/trans isomerase with specificity for phospho-Ser-Pro bonds. This is Peptidyl-prolyl cis-trans isomerase Pin1 (PARV12.8) from Digitalis lanata (Grecian foxglove).